The sequence spans 184 residues: Protein Syd (184 aa).

This sequence belongs to the Syd family.

It is found in the cell inner membrane. Its function is as follows. Interacts with the SecY protein in vivo. May bind preferentially to an uncomplexed state of SecY, thus functioning either as a chelating agent for excess SecY in the cell or as a regulatory factor that negatively controls the translocase function. The polypeptide is Protein Syd (Edwardsiella ictaluri (strain 93-146)).